Consider the following 84-residue polypeptide: Large ribosomal subunit protein bL27 (84 aa).

The tract at residues M1–G22 is disordered.

This sequence belongs to the bacterial ribosomal protein bL27 family.

This chain is Large ribosomal subunit protein bL27, found in Shewanella baltica (strain OS223).